A 96-amino-acid chain; its full sequence is YcgL domain-containing protein Csal_1462 (96 aa).

A YcgL domain is found at 4-88; the sequence is RLCEIFKSPR…ARESYLLDLY (85 aa).

This Chromohalobacter salexigens (strain ATCC BAA-138 / DSM 3043 / CIP 106854 / NCIMB 13768 / 1H11) protein is YcgL domain-containing protein Csal_1462.